The following is a 236-amino-acid chain: CD81 antigen (236 aa).

Topologically, residues 1–12 (MGVEGCTKCIKY) are cytoplasmic. The helical transmembrane segment at 13 to 33 (LLFVFNFVFWLAGGVILGVAL) threads the bilayer. The Extracellular segment spans residues 34–63 (WLRHDPQTTNLLYLELGDKPAPNTFYVGIY). Residues 64–84 (ILIAVGAVMMFVGFLGCYGAI) traverse the membrane as a helical segment. Residues 85-89 (QESQC) lie on the Cytoplasmic side of the membrane. A helical membrane pass occupies residues 90-112 (LLGTFFTCLVILFACEVAAGIWG). At 113-201 (FVNKDQIAKD…QKIDDLFSGK (89 aa)) the chain is on the extracellular side. Disulfide bonds link cysteine 156-cysteine 190 and cysteine 157-cysteine 175. A helical membrane pass occupies residues 202–224 (LYLIGIAAIVVAVIMIFEMILSM). Glutamate 219 serves as a coordination point for cholesterol. Residues 225–236 (VLCCGIRNSSVY) lie on the Cytoplasmic side of the membrane.

Belongs to the tetraspanin (TM4SF) family. As to quaternary structure, homodimer. Part of a complex composed of CD19, CR2/CD21, CD81 and IFITM1/CD225 in the membrane of mature B cells. Interacts (via the second extracellular domain) with CD19; this interaction is initiated early during biosynthesis in the ER and enables trafficking of only properly folded CD19. Part of a complex that includes MHC class II/HLA-DR molecules and IFITM1. Interacts with IFITM1. Interacts with IFITM2 and IFITM3. Part of integrin-tetraspanin complex composed of CD9, CD81, beta-1 and beta-2 integrins in the membrane of monocyte/macrophages. Interacts (via the second extracellular domain) with integrin ITGAV:ITGB3. Interacts with CD247/CD3 zeta, ICAM1 and CD9 at the immune synapse on T cell membrane. Part of a GPCR-tetraspanin complex consisting at least of ADGRG1, CD81, possibly CD9, and GNA11 in which CD81 enhances the association of ADGRG1 with GNA11. Part of a complex composed of CD9, CD81, PTGFRN and IGSF8. Interacts directly with IGSF8. Interacts with CD53 and SCIMP. Interacts with SAMHD1 (via its C-terminus). Interacts with glypican GPC3 and with the transcriptional repressor HHEX; binding to GPC3 decreases the availability of free CD81 for binding to HHEX, resulting in nuclear translocation of HHEX and transcriptional repression. Interacts with CLDN1. Interacts with CLDN6 and CLDN9. Post-translationally, not glycosylated. In terms of processing, likely constitutively palmitoylated at low levels. Protein palmitoylation is up-regulated upon coligation of BCR and CD9-C2R-CD81 complexes in lipid rafts.

Its subcellular location is the cell membrane. The protein localises to the basolateral cell membrane. Its function is as follows. Structural component of specialized membrane microdomains known as tetraspanin-enriched microdomains (TERMs), which act as platforms for receptor clustering and signaling. Essential for trafficking and compartmentalization of CD19 receptor on the surface of activated B cells. Upon initial encounter with microbial pathogens, enables the assembly of CD19-CR2/CD21 and B cell receptor (BCR) complexes at signaling TERMs, lowering the threshold dose of antigen required to trigger B cell clonal expansion and antibody production. In T cells, facilitates the localization of CD247/CD3 zeta at antigen-induced synapses with B cells, providing for costimulation and polarization toward T helper type 2 phenotype. Present in MHC class II compartments, may also play a role in antigen presentation. Can act both as positive and negative regulator of homotypic or heterotypic cell-cell fusion processes. Positively regulates sperm-egg fusion and may be involved in acrosome reaction. In myoblasts, associates with CD9 and PTGFRN and inhibits myotube fusion during muscle regeneration. In macrophages, associates with CD9 and beta-1 and beta-2 integrins, and prevents macrophage fusion into multinucleated giant cells specialized in ingesting complement-opsonized large particles. Also prevents the fusion of mononuclear cell progenitors into osteoclasts in charge of bone resorption. May regulate the compartmentalization of enzymatic activities. In T cells, defines the subcellular localization of dNTPase SAMHD1 and permits its degradation by the proteasome, thereby controlling intracellular dNTP levels. Also involved in cell adhesion and motility. Positively regulates integrin-mediated adhesion of macrophages, particularly relevant for the inflammatory response in the lung. The protein is CD81 antigen (CD81) of Pan troglodytes (Chimpanzee).